We begin with the raw amino-acid sequence, 92 residues long: Putative defensin-like protein 251 (92 aa).

The signal sequence occupies residues 1-27; it reads MRCVTSFVVFCILMFFVLNIFTVEVKA. Intrachain disulfides connect Cys-34-Cys-90, Cys-45-Cys-69, Cys-53-Cys-82, and Cys-67-Cys-84.

The protein belongs to the DEFL family.

The protein localises to the secreted. The polypeptide is Putative defensin-like protein 251 (SCRL12) (Arabidopsis thaliana (Mouse-ear cress)).